Here is a 407-residue protein sequence, read N- to C-terminus: SERPINE1 mRNA-binding protein 1 (407 aa).

Ser-25 carries the phosphoserine modification. The segment at 33–227 (AAENKKKEAG…GSGSHNWGTV (195 aa)) is disordered. Over residues 51 to 68 (AKSAAQAAAQTNSNAAGK) the composition is skewed to low complexity. Lys-52 carries the post-translational modification N6-acetyllysine; alternate. A Glycyl lysine isopeptide (Lys-Gly) (interchain with G-Cter in SUMO1); alternate cross-link involves residue Lys-52. N6-acetyllysine is present on Lys-68. Composition is skewed to basic and acidic residues over residues 70–80 (LRKESQKDRKN), 89–114 (VDKK…RRPD), and 122–162 (KIID…DRPI). Lys-102 is covalently cross-linked (Glycyl lysine isopeptide (Lys-Gly) (interchain with G-Cter in SUMO1); alternate). Lys-102 participates in a covalent cross-link: Glycyl lysine isopeptide (Lys-Gly) (interchain with G-Cter in SUMO2). Lys-102 participates in a covalent cross-link: Glycyl lysine isopeptide (Lys-Gly) (interchain with G-Cter in SUMO2); alternate. N6-acetyllysine is present on residues Lys-122 and Lys-140. Gly residues predominate over residues 164 to 182 (GRGGLGRGRGGRGRGMGRG). Omega-N-methylarginine is present on residues Arg-165 and Arg-188. Basic and acidic residues predominate over residues 183 to 199 (DGFDSRGKREFDRHSGS). A phosphoserine mark is found at Ser-197, Ser-199, Ser-203, Ser-205, and Ser-208. Lys-211 bears the N6-acetyllysine; alternate mark. A Glycyl lysine isopeptide (Lys-Gly) (interchain with G-Cter in SUMO2); alternate cross-link involves residue Lys-211. Arg-216 is modified (omega-N-methylarginine). At Ser-221 the chain carries Phosphoserine. At Thr-226 the chain carries Phosphothreonine. A Glycyl lysine isopeptide (Lys-Gly) (interchain with G-Cter in SUMO1); alternate cross-link involves residue Lys-228. Lys-228 is covalently cross-linked (Glycyl lysine isopeptide (Lys-Gly) (interchain with G-Cter in SUMO2); alternate). Ser-234 bears the Phosphoserine mark. Over residues 242-256 (ISYNCSDLDQSNVTE) the composition is skewed to polar residues. Disordered stretches follow at residues 242-291 (ISYN…TLDE) and 327-407 (SKSE…PALA). The segment covering 261 to 274 (GEEHPVADTENKEN) has biased composition (basic and acidic residues). Residue Lys-280 forms a Glycyl lysine isopeptide (Lys-Gly) (interchain with G-Cter in SUMO1); alternate linkage. A Glycyl lysine isopeptide (Lys-Gly) (interchain with G-Cter in SUMO2) cross-link involves residue Lys-280. Residue Lys-280 forms a Glycyl lysine isopeptide (Lys-Gly) (interchain with G-Cter in SUMO2); alternate linkage. Composition is skewed to basic and acidic residues over residues 281-291 (EEGPKEMTLDE) and 327-341 (SKSE…VMDH). Lys-328 bears the N6-acetyllysine mark. Ser-329 bears the Phosphoserine mark. Gly residues predominate over residues 362–371 (GRPGRGGRGG). Arg-363, Arg-366, and Arg-369 each carry omega-N-methylarginine. Residues Ser-391 and Ser-393 each carry the phosphoserine modification.

Belongs to the SERBP1-HABP4 family. As to quaternary structure, associates with mature 80S ribosomes. Interacts with EEF2/eEF2; interaction sequesters EEF2/eEF2 at the A-site of the ribosome, thereby blocking the interaction sites of the mRNA-tRNA complex, promoting ribosome stabilization and hibernation. Interacts with SPIN1. Interacts with CHD3 and TDRD3. Interacts with ZDHHC17 (via ANK repeats). Phosphorylation by MTOR inhibits SERBP1 and relieves ribosome hibernation.

Functionally, ribosome-binding protein that promotes ribosome hibernation, a process during which ribosomes are stabilized in an inactive state and preserved from proteasomal degradation. Acts via its association with EEF2/eEF2 factor, sequestering EEF2/eEF2 at the A-site of the ribosome and promoting ribosome stabilization and storage in an inactive state. May also play a role in the regulation of mRNA stability: binds to the 3'-most 134 nt of the SERPINE1/PAI1 mRNA, a region which confers cyclic nucleotide regulation of message decay. Seems to play a role in PML-nuclear bodies formation. The chain is SERPINE1 mRNA-binding protein 1 from Oryctolagus cuniculus (Rabbit).